The sequence spans 1237 residues: Zinc finger protein ZFAT (1237 aa).

The segment at 12–35 adopts a C2H2-type 1 zinc-finger fold; sequence FMCKCCNLFSPNQSELVTHVSEKH. The interval 50–110 is disordered; it reads RPLNTPENPN…GPLATEEGSR (61 aa). The segment covering 70–81 has biased composition (basic residues); that stretch reads MKRKRGRPKGST. A C2H2-type 2; degenerate zinc finger spans residues 116 to 141; that stretch reads LECSKCCRKFSNTRQLRKHICIIVLN. The disordered stretch occupies residues 147–188; the sequence is GDAGNESDLDLEKTYKEDDREKASKRPRAQKTEKVQKISGKE. Basic and acidic residues predominate over residues 156 to 186; sequence DLEKTYKEDDREKASKRPRAQKTEKVQKISG. 7 C2H2-type zinc fingers span residues 271–293, 299–321, 326–349, 354–377, 404–426, 432–454, and 458–481; these read FTCE…LRIH, YKCS…LRKH, FACD…ERVH, QHCR…RDMH, YDCH…MLVH, FACE…VRKH, and YVCA…REVH. Residues cysteine 273, cysteine 276, histidine 289, histidine 293, cysteine 301, cysteine 304, histidine 317, histidine 321, cysteine 328, cysteine 331, histidine 344, histidine 349, cysteine 356, cysteine 359, histidine 372, histidine 377, cysteine 406, cysteine 409, histidine 422, and histidine 426 each contribute to the Zn(2+) site. Residues cysteine 460, cysteine 463, histidine 476, and histidine 481 each coordinate Zn(2+). Disordered stretches follow at residues 551–576 and 601–671; these read VPGD…LSPC and SDTS…CLRA. Positions 565 to 574 are enriched in polar residues; it reads TPQSESSSLS. The span at 601 to 617 shows a compositional bias: low complexity; sequence SDTSSAEPPAAAEATSD. C2H2-type zinc fingers lie at residues 737 to 759, 765 to 788, 793 to 817, and 825 to 848; these read LECE…VRTH, YYCS…IQKH, LKCP…LKVH, and YSCP…KTNH. 24 residues coordinate Zn(2+): cysteine 767, cysteine 770, histidine 783, histidine 788, cysteine 795, cysteine 800, histidine 813, histidine 817, cysteine 827, cysteine 830, histidine 843, histidine 848, cysteine 877, cysteine 880, histidine 894, histidine 898, cysteine 906, cysteine 909, histidine 922, histidine 926, cysteine 934, cysteine 937, histidine 950, and leucine 953. The C2H2-type 14; degenerate zinc finger occupies 875-898; that stretch reads MKCPYCDFYFMKNGSDLQRHIWAH. C2H2-type zinc fingers lie at residues 904–926, 932–954, 961–983, 989–1012, and 1036–1059; these read FKCS…MNRH, HLCD…KLLH, FKCT…MEQH, FRCA…NRKH, and LKCP…KNKH.

In terms of tissue distribution, detected in spleen and thymus but not in liver, muscle, heart, kidney, brain, bone marrow or pancreas. Expressed in CD19+, CD4+ and CD8+ lymphocytes but not in CD11b+ lymphocytes or peritoneal macrophages (at protein level).

The protein resides in the nucleus. It localises to the cytoplasm. It is found in the cytosol. Functionally, may be involved in transcriptional regulation. Overexpression causes down-regulation of a number of genes involved in the immune response. Some genes are also up-regulated. This chain is Zinc finger protein ZFAT (Zfat), found in Mus musculus (Mouse).